A 102-amino-acid polypeptide reads, in one-letter code: NADH-quinone oxidoreductase subunit K 1 (102 aa).

3 helical membrane-spanning segments follow: residues 5–25 (LLHVLILAGILFVLGLTCVLV), 30–50 (IIMMLIGIEIMLNAAMLAFVG), and 62–82 (VFALMIIAMTSAEVSLALALV).

Belongs to the complex I subunit 4L family. In terms of assembly, NDH-1 is composed of 14 different subunits. Subunits NuoA, H, J, K, L, M, N constitute the membrane sector of the complex.

It is found in the cell inner membrane. It carries out the reaction a quinone + NADH + 5 H(+)(in) = a quinol + NAD(+) + 4 H(+)(out). NDH-1 shuttles electrons from NADH, via FMN and iron-sulfur (Fe-S) centers, to quinones in the respiratory chain. The immediate electron acceptor for the enzyme in this species is believed to be ubiquinone. Couples the redox reaction to proton translocation (for every two electrons transferred, four hydrogen ions are translocated across the cytoplasmic membrane), and thus conserves the redox energy in a proton gradient. The sequence is that of NADH-quinone oxidoreductase subunit K 1 from Geotalea uraniireducens (strain Rf4) (Geobacter uraniireducens).